The chain runs to 592 residues: Elongation factor 1 alpha-like protein (592 aa).

Disordered stretches follow at residues 1-35 and 78-159; these read MSRH…EEFR and SSKA…KQNP. Residues 12 to 32 show a composition bias toward acidic residues; it reads LDDYELDEEPGEEELTEEQEE. The span at 82–111 shows a compositional bias: basic and acidic residues; the sequence is GAKEKQNTDSQKEKKQNKSKEALADAKDPL. The span at 113–124 shows a compositional bias: polar residues; sequence ESSNGIKNLSLN. Residues 137–151 show a composition bias toward basic and acidic residues; that stretch reads VKMKNSSESDNQPEK. Residues 175–401 form the tr-type G domain; that stretch reads KPVVHLVVTG…DQLVPPEKPY (227 aa). The segment at 184 to 191 is G1; it reads GHVDSGKS. 184–191 contacts GTP; it reads GHVDSGKS. The segment at 240–244 is G2; the sequence is GVTMD. The interval 261–264 is G3; the sequence is DAPG. GTP is bound by residues 323-326 and 352-355; these read NKLD and FKTS. Positions 323–326 are G4; that stretch reads NKLD. The segment at 363 to 365 is G5; that stretch reads SAI.

The protein belongs to the TRAFAC class translation factor GTPase superfamily. Classic translation factor GTPase family. Component of the Dom34-Hbs1 complex, also named Pelota-HBS1L complex, composed of dom34 and hbs1.

The protein localises to the cytoplasm. The catalysed reaction is GTP + H2O = GDP + phosphate + H(+). In terms of biological role, GTPase component of the Dom34-Hbs1 complex, a complex that recognizes stalled ribosomes and triggers the No-Go Decay (NGD) pathway. The Dom34-Hbs1 complex recognizes ribosomes stalled at the 3' end of an mRNA and engages stalled ribosomes by destabilizing mRNA in the mRNA channel. Following ribosome-binding, the Pelota-HBS1L complex promotes the disassembly of stalled ribosomes, followed by degradation of damaged mRNAs as part of the NGD pathway. This Schizosaccharomyces pombe (strain 972 / ATCC 24843) (Fission yeast) protein is Elongation factor 1 alpha-like protein.